A 344-amino-acid polypeptide reads, in one-letter code: Phosphate acyltransferase (344 aa).

Belongs to the PlsX family. As to quaternary structure, homodimer. Probably interacts with PlsY.

The protein localises to the cytoplasm. It carries out the reaction a fatty acyl-[ACP] + phosphate = an acyl phosphate + holo-[ACP]. Its pathway is lipid metabolism; phospholipid metabolism. Its function is as follows. Catalyzes the reversible formation of acyl-phosphate (acyl-PO(4)) from acyl-[acyl-carrier-protein] (acyl-ACP). This enzyme utilizes acyl-ACP as fatty acyl donor, but not acyl-CoA. The chain is Phosphate acyltransferase from Yersinia enterocolitica serotype O:8 / biotype 1B (strain NCTC 13174 / 8081).